Consider the following 306-residue polypeptide: Mating type protein SmtA-1 (306 aa).

Positions 49 to 104 form a DNA-binding region, alpha box; the sequence is APKKKVNGFMGFRSYYSPLFSQFPQKARSPFMTILWQHDPFHNEWDFMCSVYSSIR.

This sequence belongs to the MATALPHA1 family.

The protein resides in the nucleus. In terms of biological role, mating type proteins are sequence specific DNA-binding proteins that act as master switches in fungal differentiation by controlling gene expression in a cell type-specific fashion. Transcriptional activator that induces the transcription of alpha-specific genes. The sequence is that of Mating type protein SmtA-1 (SMTA1) from Sordaria macrospora (strain ATCC MYA-333 / DSM 997 / K(L3346) / K-hell).